The following is a 245-amino-acid chain: Ribosomal RNA small subunit methyltransferase G (245 aa).

S-adenosyl-L-methionine-binding positions include Gly-80, Phe-85, 103–105 (DAT), 131–132 (AE), and Arg-150.

Belongs to the methyltransferase superfamily. RNA methyltransferase RsmG family.

It is found in the cytoplasm. In terms of biological role, specifically methylates the N7 position of a guanine in 16S rRNA. The sequence is that of Ribosomal RNA small subunit methyltransferase G from Deinococcus geothermalis (strain DSM 11300 / CIP 105573 / AG-3a).